A 1132-amino-acid chain; its full sequence is Phospholipid-transporting ATPase IG (1132 aa).

Residues 1-66 are Cytoplasmic-facing; sequence MQMVPSLPPA…NFLPKNLFEQ (66 aa). A helical membrane pass occupies residues 67–85; that stretch reads FRRIANFYFLIIFLVQVTV. Position 86 (Asp86) is a topological domain, extracellular. The chain crosses the membrane as a helical span at residues 87–107; sequence TPTSPVTSGLPLFFVITVTAI. The Cytoplasmic segment spans residues 108–290; the sequence is KQGYEDCLRH…SQKRSAVEKS (183 aa). A helical transmembrane segment spans residues 291 to 311; that stretch reads INAFLIVYLFILLTKAAVCTT. The Extracellular segment spans residues 312-346; the sequence is LKYVWQSTPYNDEPWYNQKTQKERETLKVLKMFTD. The helical transmembrane segment at 347-367 threads the bilayer; the sequence is FLSFMVLFNFIIPVSMYVTVE. At 368-879 the chain is on the cytoplasmic side; the sequence is MQKFLGSFFI…YVRIAHLVQY (512 aa). The 4-aspartylphosphate intermediate role is filled by Asp412. Asp412, Lys413, and Thr414 together coordinate ATP. Asp412 is a binding site for Mg(2+). Thr414 contributes to the Mg(2+) binding site. At Ser445 the chain carries Phosphoserine. The ATP site is built by Glu501, Phe543, Lys566, Arg597, Thr677, Gly678, Asp679, Arg792, and Lys798. Asp819 is a Mg(2+) binding site. Residues Asn822 and Asp823 each contribute to the ATP site. Asp823 is a binding site for Mg(2+). A helical membrane pass occupies residues 880-900; the sequence is FFYKNLCFILPQFLYQFFCGF. Topologically, residues 901–908 are extracellular; the sequence is SQQPLYDA. Residues 909–929 traverse the membrane as a helical segment; that stretch reads AYLTMYNICFTSLPILAYSLL. Over 930–955 the chain is Cytoplasmic; it reads EQHINIDTLTSDPRLYMKISGNAMLQ. The chain crosses the membrane as a helical span at residues 956–976; it reads LGPFLYWTFLAAFEGTVFFFG. Over 977 to 995 the chain is Extracellular; that stretch reads TYFLFQTASLEENGKVYGN. The chain crosses the membrane as a helical span at residues 996–1016; the sequence is WTFGTIVFTVLVFTVTLKLAL. Topologically, residues 1017–1026 are cytoplasmic; sequence DTRFWTWINH. The helical transmembrane segment at 1027 to 1047 threads the bilayer; sequence FVIWGSLAFYVFFSFFWGGII. Residues 1048–1069 lie on the Extracellular side of the membrane; that stretch reads WPFLKQQRMYFVFAQMLSSVST. The helical transmembrane segment at 1070–1090 threads the bilayer; it reads WLAIILLIFISLFPEILLIVL. Residues 1091 to 1132 lie on the Cytoplasmic side of the membrane; sequence KNVRRRSARRNLSCRRASDSLSARPSVRPLLLRTFSDESNVL. 3 positions are modified to phosphoserine: Ser1108, Ser1116, and Ser1126. A Di-leucine motif motif is present at residues 1116 to 1121; that stretch reads SVRPLL.

This sequence belongs to the cation transport ATPase (P-type) (TC 3.A.3) family. Type IV subfamily. Component of a P4-ATPase flippase complex which consists of a catalytic alpha subunit ATP11C and an accessory beta subunit TMEM30A. The cofactor is Mg(2+). In terms of processing, proteolytically cleaved by CASP3, CASP6 and CASP7. Post-translationally, phosphorylated at Ser-1116 likely by PRKCA; this creates a functional di-leucine motif that is sufficient for endocytosis. As to expression, widely expressed.

The protein resides in the cell membrane. It is found in the endoplasmic reticulum membrane. The protein localises to the early endosome membrane. Its subcellular location is the recycling endosome membrane. The catalysed reaction is ATP + H2O + phospholipidSide 1 = ADP + phosphate + phospholipidSide 2.. It carries out the reaction a 1,2-diacyl-sn-glycero-3-phospho-L-serine(out) + ATP + H2O = a 1,2-diacyl-sn-glycero-3-phospho-L-serine(in) + ADP + phosphate + H(+). The enzyme catalyses a 1,2-diacyl-sn-glycero-3-phosphoethanolamine(out) + ATP + H2O = a 1,2-diacyl-sn-glycero-3-phosphoethanolamine(in) + ADP + phosphate + H(+). Its activity is regulated as follows. The flippase activity is inactivated by caspase-mediated cleavage in apoptotic cells, allowing for PS exposure on the cell surface and engulfment of apoptotic cells by macrophages. The ATPase activity is up-regulated by aminophospholipids PS and PE and down-regulated by Increasing intracellular Ca2+ levels. Its function is as follows. Catalytic component of a P4-ATPase flippase complex which catalyzes the hydrolysis of ATP coupled to the transport of aminophospholipids, phosphatidylserines (PS) and phosphatidylethanolamines (PE), from the outer to the inner leaflet of the plasma membrane. Major PS-flippase in immune cell subsets. In erythrocyte plasma membrane, it is required to maintain PS in the inner leaflet preventing its exposure on the surface. This asymmetric distribution is critical for the survival of erythrocytes in circulation since externalized PS is a phagocytic signal for erythrocyte clearance by splenic macrophages. Required for B cell differentiation past the pro-B cell stage. Seems to mediate PS flipping in pro-B cells. May be involved in the transport of cholestatic bile acids. In Homo sapiens (Human), this protein is Phospholipid-transporting ATPase IG.